The following is a 116-amino-acid chain: Large ribosomal subunit protein bL19 (116 aa).

The protein belongs to the bacterial ribosomal protein bL19 family.

Its function is as follows. This protein is located at the 30S-50S ribosomal subunit interface and may play a role in the structure and function of the aminoacyl-tRNA binding site. This Geobacillus stearothermophilus (Bacillus stearothermophilus) protein is Large ribosomal subunit protein bL19 (rplS).